The primary structure comprises 504 residues: Diacylglycerol O-acyltransferase 1B (504 aa).

Residues 1-72 (MAISDEPESV…VNSQQQNEKQ (72 aa)) form a disordered region. Over residues 24–41 (SATSTAGLFNSPETTTDS) the composition is skewed to polar residues. The segment covering 53–65 (DDSINSDDAAVNS) has biased composition (low complexity). 7 helical membrane-spanning segments follow: residues 108–128 (HAGL…RLII), 152–172 (WPLF…FIVE), 184–204 (VVVV…VLVI), 209–229 (SAFV…LKLV), 259–279 (YPYN…TLCY), 301–321 (LIIF…PIVQ), and 348–368 (VWLC…AELL). An FYXDWWN motif motif is present at residues 375–381 (FYKDWWN). Helical transmembrane passes span 416-436 (AAAL…CIAV), 438-458 (CHIF…LVLI), and 471-491 (VGNM…CVLL). His-430 is a catalytic residue.

The protein belongs to the membrane-bound acyltransferase family. Sterol o-acyltransferase subfamily. In terms of tissue distribution, highly expressed in flowers and pods. Expressed at low levels in roots, stems and leaves.

It is found in the endoplasmic reticulum membrane. The catalysed reaction is an acyl-CoA + a 1,2-diacyl-sn-glycerol = a triacyl-sn-glycerol + CoA. It participates in glycerolipid metabolism; triacylglycerol biosynthesis. Major contributors to triacylglycerol (TAG) synthesis and oil accumulation in developing seeds. Catalyzes the acylation of the sn-3 hydroxy group of sn-1,2-diacylglycerol using acyl-CoA. Has a marked preference for oleoyl-CoA and sn-1,2-dioleoylglycerol over vernoloyl-CoA and sn-1,2-divernoloylglycerol. The sequence is that of Diacylglycerol O-acyltransferase 1B from Glycine max (Soybean).